Here is a 496-residue protein sequence, read N- to C-terminus: Lysine--tRNA ligase (496 aa).

Mg(2+) is bound by residues E409 and E416.

Belongs to the class-II aminoacyl-tRNA synthetase family. Homodimer. The cofactor is Mg(2+).

It localises to the cytoplasm. The catalysed reaction is tRNA(Lys) + L-lysine + ATP = L-lysyl-tRNA(Lys) + AMP + diphosphate. This is Lysine--tRNA ligase from Streptococcus suis (strain 05ZYH33).